A 564-amino-acid chain; its full sequence is Potassium-transporting ATPase potassium-binding subunit (564 aa).

10 consecutive transmembrane segments (helical) span residues 7 to 27 (LLIL…GRFF), 67 to 87 (AWAL…MLML), 135 to 155 (VGLT…LVAL), 179 to 199 (LYAL…QGVP), 258 to 278 (FELV…GHYV), 286 to 306 (AILG…LWAE), 382 to 402 (VGLN…GLMI), 420 to 440 (LLVA…AIAA), 487 to 507 (LMLS…VLAL), and 528 to 548 (GLLF…LTFL).

The protein belongs to the KdpA family. In terms of assembly, the system is composed of three essential subunits: KdpA, KdpB and KdpC.

It is found in the cell inner membrane. Functionally, part of the high-affinity ATP-driven potassium transport (or Kdp) system, which catalyzes the hydrolysis of ATP coupled with the electrogenic transport of potassium into the cytoplasm. This subunit binds the periplasmic potassium ions and delivers the ions to the membrane domain of KdpB through an intramembrane tunnel. The sequence is that of Potassium-transporting ATPase potassium-binding subunit from Pseudomonas syringae pv. tomato (strain ATCC BAA-871 / DC3000).